We begin with the raw amino-acid sequence, 457 residues long: Antizyme inhibitor 2 (457 aa).

The segment at 115-138 is necessary for polyamine uptake stimulation; sequence QVAQIKYAAKHGVRLLSFDNEVEL.

This sequence belongs to the Orn/Lys/Arg decarboxylase class-II family. ODC antizyme inhibitor subfamily. As to quaternary structure, monomer. Interacts with OAZ1, OAZ2 and OAZ3; this interaction disrupts the interaction between the antizyme and ODC1. Does not form a heterodimer with ODC1. In terms of processing, ubiquitinated, leading to its proteasomal degradation; a process that is reduced in presence of antizymes. May also be degraded through the lysosomal degradative pathway in a proteasomal-independent manner.

It localises to the nucleus. The protein localises to the cytoplasm. The protein resides in the perinuclear region. It is found in the membrane. Its subcellular location is the cytoplasmic vesicle. It localises to the endoplasmic reticulum-Golgi intermediate compartment. The protein localises to the golgi apparatus. The protein resides in the cis-Golgi network. It is found in the trans-Golgi network. Its subcellular location is the cytoplasmic granule. It localises to the cell projection. The protein localises to the axon. The protein resides in the dendrite. It is found in the perikaryon. Antizyme inhibitor (AZI) protein that positively regulates ornithine decarboxylase (ODC) activity and polyamine uptake. AZI is an enzymatically inactive ODC homolog that counteracts the negative effect of ODC antizymes (AZs) OAZ1, OAZ2 and OAZ3 on ODC activity by competing with ODC for antizyme-binding. Inhibits antizyme-dependent ODC degradation and releases ODC monomers from their inactive complex with antizymes, leading to formation of the catalytically active ODC homodimer and restoring polyamine production. Participates in the morphological integrity of the trans-Golgi network (TGN) and functions as a regulator of intracellular secretory vesicle trafficking. The polypeptide is Antizyme inhibitor 2 (Azin2) (Rattus norvegicus (Rat)).